The chain runs to 206 residues: Putative transporter protein AmiS2 (206 aa).

7 consecutive transmembrane segments (helical) span residues 4–24 (VGLL…LGTV), 29–49 (ASVL…VMLI), 56–76 (SAVL…YVGI), 86–106 (GIGW…FLSF), 113–133 (VFGV…LVLG), 142–162 (FTGW…AFLI), and 173–193 (VAAG…ILAA).

Belongs to the AmiS/UreI family.

It localises to the cell membrane. Functionally, possible transporter that might be responsible for the adsorption of amidase substrates or release of their hydrolysis products. The sequence is that of Putative transporter protein AmiS2 (amiS2) from Rhodococcus erythropolis (Arthrobacter picolinophilus).